Here is a 732-residue protein sequence, read N- to C-terminus: Acylamino-acid-releasing enzyme (732 aa).

Residue M1 is modified to N-acetylmethionine. Phosphoserine is present on residues S185 and S187. Catalysis depends on charge relay system residues S587, D675, and H707.

In terms of assembly, homotetramer. As to expression, expressed in erythrocytes (at protein level).

It localises to the cytoplasm. It carries out the reaction Cleavage of an N-acetyl or N-formyl amino acid from the N-terminus of a polypeptide.. Its activity is regulated as follows. Homotetramerization is required for activity. Tetramerization results in the formation of a gated channel which is involved in substrate selection and substrate access to the catalytic sites. This enzyme catalyzes the hydrolysis of the N-terminal peptide bond of an N-acetylated peptide to generate an N-acetylated amino acid and a peptide with a free N-terminus. It preferentially cleaves off Ac-Ala, Ac-Met and Ac-Ser. Also, involved in the degradation of oxidized and glycated proteins. The polypeptide is Acylamino-acid-releasing enzyme (APEH) (Homo sapiens (Human)).